The chain runs to 273 residues: Dermonecrotic toxin LvSicTox-alphaIC1ai (273 aa).

Residue His-5 is part of the active site. Residues Glu-25 and Asp-27 each coordinate Mg(2+). The Nucleophile role is filled by His-41. 2 cysteine pairs are disulfide-bonded: Cys-45/Cys-51 and Cys-47/Cys-190. Asp-85 is a Mg(2+) binding site.

The protein belongs to the arthropod phospholipase D family. Class II subfamily. Requires Mg(2+) as cofactor. In terms of tissue distribution, expressed by the venom gland.

It localises to the secreted. It carries out the reaction an N-(acyl)-sphingosylphosphocholine = an N-(acyl)-sphingosyl-1,3-cyclic phosphate + choline. It catalyses the reaction an N-(acyl)-sphingosylphosphoethanolamine = an N-(acyl)-sphingosyl-1,3-cyclic phosphate + ethanolamine. The catalysed reaction is a 1-acyl-sn-glycero-3-phosphocholine = a 1-acyl-sn-glycero-2,3-cyclic phosphate + choline. The enzyme catalyses a 1-acyl-sn-glycero-3-phosphoethanolamine = a 1-acyl-sn-glycero-2,3-cyclic phosphate + ethanolamine. Dermonecrotic toxins cleave the phosphodiester linkage between the phosphate and headgroup of certain phospholipids (sphingolipid and lysolipid substrates), forming an alcohol (often choline) and a cyclic phosphate. This toxin acts on sphingomyelin (SM). It may also act on ceramide phosphoethanolamine (CPE), lysophosphatidylcholine (LPC) and lysophosphatidylethanolamine (LPE), but not on lysophosphatidylserine (LPS), and lysophosphatidylglycerol (LPG). It acts by transphosphatidylation, releasing exclusively cyclic phosphate products as second products. Induces dermonecrosis, hemolysis, increased vascular permeability, edema, inflammatory response, and platelet aggregation. The polypeptide is Dermonecrotic toxin LvSicTox-alphaIC1ai (Loxosceles variegata (Recluse spider)).